Reading from the N-terminus, the 62-residue chain is Sauvatide (62 aa).

A signal peptide spans 1–24 (MDILKKSLFLILFLGLVSISFCDG). A propeptide spanning residues 25–46 (EKRQDDDEANESEEKKEIHEVE) is cleaved from the precursor. At Lys58 the chain carries Lysine amide.

In terms of tissue distribution, expressed by the skin glands.

The protein resides in the secreted. Functionally, induces contraction of smooth muscle in isolated rat urinary bladder with an EC(50) value of 2.2nM. This chain is Sauvatide, found in Phyllomedusa sauvagei (Sauvage's leaf frog).